A 1070-amino-acid chain; its full sequence is RecBCD enzyme subunit RecC (1070 aa).

This sequence belongs to the RecC family. As to quaternary structure, heterotrimer of RecB, RecC and RecD. All subunits contribute to DNA-binding.

Its function is as follows. A helicase/nuclease that prepares dsDNA breaks (DSB) for recombinational DNA repair. Binds to DSBs and unwinds DNA via a highly rapid and processive ATP-dependent bidirectional helicase activity. Unwinds dsDNA until it encounters a Chi (crossover hotspot instigator) sequence from the 3' direction. Cuts ssDNA a few nucleotides 3' to the Chi site. The properties and activities of the enzyme are changed at Chi. The Chi-altered holoenzyme produces a long 3'-ssDNA overhang and facilitates RecA-binding to the ssDNA for homologous DNA recombination and repair. Holoenzyme degrades any linearized DNA that is unable to undergo homologous recombination. In the holoenzyme this subunit recognizes the wild-type Chi sequence, and when added to isolated RecB increases its ATP-dependent helicase processivity. This chain is RecBCD enzyme subunit RecC, found in Buchnera aphidicola subsp. Acyrthosiphon pisum (strain APS) (Acyrthosiphon pisum symbiotic bacterium).